The sequence spans 163 residues: Protein-export protein SecB (163 aa).

It belongs to the SecB family. Homotetramer, a dimer of dimers. One homotetramer interacts with 1 SecA dimer.

Its subcellular location is the cytoplasm. In terms of biological role, one of the proteins required for the normal export of preproteins out of the cell cytoplasm. It is a molecular chaperone that binds to a subset of precursor proteins, maintaining them in a translocation-competent state. It also specifically binds to its receptor SecA. The polypeptide is Protein-export protein SecB (Pseudomonas aeruginosa (strain LESB58)).